The primary structure comprises 198 residues: HTH-type transcriptional regulator BetI (198 aa).

The 61-residue stretch at 8–68 folds into the HTH tetR-type domain; that stretch reads PLRRRELIDA…ATMRHLLREL (61 aa). A DNA-binding region (H-T-H motif) is located at residues 31-50; sequence TVAQIAHEAGVSPALAHHYF.

It functions in the pathway amine and polyamine biosynthesis; betaine biosynthesis via choline pathway [regulation]. In terms of biological role, repressor involved in the biosynthesis of the osmoprotectant glycine betaine. It represses transcription of the choline transporter BetT and the genes of BetAB involved in the synthesis of glycine betaine. The polypeptide is HTH-type transcriptional regulator BetI (Brucella abortus (strain 2308)).